Consider the following 290-residue polypeptide: Iron-sulfur cluster carrier protein (290 aa).

Residue 47 to 54 coordinates ATP; that stretch reads GKGGVGKS.

It belongs to the Mrp/NBP35 ATP-binding proteins family. Homodimer.

Its function is as follows. Binds and transfers iron-sulfur (Fe-S) clusters to target apoproteins. Can hydrolyze ATP. This Methanocaldococcus jannaschii (strain ATCC 43067 / DSM 2661 / JAL-1 / JCM 10045 / NBRC 100440) (Methanococcus jannaschii) protein is Iron-sulfur cluster carrier protein.